The primary structure comprises 275 residues: Ribosomal RNA small subunit methyltransferase A (275 aa).

Asn28, Leu30, Gly55, Glu77, Asp103, and Asn123 together coordinate S-adenosyl-L-methionine.

The protein belongs to the class I-like SAM-binding methyltransferase superfamily. rRNA adenine N(6)-methyltransferase family. RsmA subfamily.

It localises to the cytoplasm. It carries out the reaction adenosine(1518)/adenosine(1519) in 16S rRNA + 4 S-adenosyl-L-methionine = N(6)-dimethyladenosine(1518)/N(6)-dimethyladenosine(1519) in 16S rRNA + 4 S-adenosyl-L-homocysteine + 4 H(+). Its function is as follows. Specifically dimethylates two adjacent adenosines (A1518 and A1519) in the loop of a conserved hairpin near the 3'-end of 16S rRNA in the 30S particle. May play a critical role in biogenesis of 30S subunits. This is Ribosomal RNA small subunit methyltransferase A from Rhizobium johnstonii (strain DSM 114642 / LMG 32736 / 3841) (Rhizobium leguminosarum bv. viciae).